We begin with the raw amino-acid sequence, 677 residues long: Methionine--tRNA ligase (677 aa).

Residues 15-25 carry the 'HIGH' region motif; the sequence is PYANGSIHLGH. Zn(2+)-binding residues include Cys-146, Cys-149, Cys-159, and Cys-162. A 'KMSKS' region motif is present at residues 333–337; the sequence is KMSKS. Residue Lys-336 coordinates ATP. One can recognise a tRNA-binding domain in the interval 575–677; it reads DFAKVDLRVA…AGAKPGHQVK (103 aa).

The protein belongs to the class-I aminoacyl-tRNA synthetase family. MetG type 1 subfamily. Homodimer. It depends on Zn(2+) as a cofactor.

It localises to the cytoplasm. It carries out the reaction tRNA(Met) + L-methionine + ATP = L-methionyl-tRNA(Met) + AMP + diphosphate. Is required not only for elongation of protein synthesis but also for the initiation of all mRNA translation through initiator tRNA(fMet) aminoacylation. This Escherichia coli (strain ATCC 8739 / DSM 1576 / NBRC 3972 / NCIMB 8545 / WDCM 00012 / Crooks) protein is Methionine--tRNA ligase.